We begin with the raw amino-acid sequence, 421 residues long: UDP-N-acetylglucosamine 1-carboxyvinyltransferase (421 aa).

22-23 is a phosphoenolpyruvate binding site; that stretch reads KN. Arg93 contacts UDP-N-acetyl-alpha-D-glucosamine. The active-site Proton donor is the Cys117. Cys117 is modified (2-(S-cysteinyl)pyruvic acid O-phosphothioketal). UDP-N-acetyl-alpha-D-glucosamine contacts are provided by residues 122 to 126, Asp308, and Leu330; that span reads RPVDL.

The protein belongs to the EPSP synthase family. MurA subfamily.

It localises to the cytoplasm. It carries out the reaction phosphoenolpyruvate + UDP-N-acetyl-alpha-D-glucosamine = UDP-N-acetyl-3-O-(1-carboxyvinyl)-alpha-D-glucosamine + phosphate. It functions in the pathway cell wall biogenesis; peptidoglycan biosynthesis. Its function is as follows. Cell wall formation. Adds enolpyruvyl to UDP-N-acetylglucosamine. The sequence is that of UDP-N-acetylglucosamine 1-carboxyvinyltransferase from Wolinella succinogenes (strain ATCC 29543 / DSM 1740 / CCUG 13145 / JCM 31913 / LMG 7466 / NCTC 11488 / FDC 602W) (Vibrio succinogenes).